A 1127-amino-acid polypeptide reads, in one-letter code: DNA-directed RNA polymerase I subunit RPA2 homolog (1127 aa).

S1025 bears the Phosphoserine mark.

This sequence belongs to the RNA polymerase beta chain family. In terms of assembly, component of the RNA polymerase I (Pol I) complex consisting of at least 13 subunits.

It localises to the nucleus. The protein resides in the nucleolus. The catalysed reaction is RNA(n) + a ribonucleoside 5'-triphosphate = RNA(n+1) + diphosphate. Antisense ribosomal siRNAs silence rRNA expression during the elongation phase by decreasing rpoa-2 occupancy downstream of the RNAi-targeted region in nrde-2-dependent manner. Functionally, DNA-dependent RNA polymerase catalyzes the transcription of DNA into RNA using the four ribonucleoside triphosphates as substrates. Second largest core component of RNA polymerase I which synthesizes ribosomal RNA precursors. Proposed to contribute to the polymerase catalytic activity and forms the polymerase active center together with the largest subunit. Pol I is composed of mobile elements and RPA2 is part of the core element with the central large cleft and probably a clamp element that moves to open and close the cleft. Specifically binds to 18S, 5.8S and 26S rDNA, but not to 5S rDNA. The chain is DNA-directed RNA polymerase I subunit RPA2 homolog from Caenorhabditis elegans.